The primary structure comprises 488 residues: Protein nucleotidyltransferase YdiU (488 aa).

Residues G90, G92, R93, K113, D125, G126, R176, and R183 each coordinate ATP. The active-site Proton acceptor is the D252. Residues N253 and D262 each coordinate Mg(2+). D262 lines the ATP pocket.

The protein belongs to the SELO family. Requires Mg(2+) as cofactor. The cofactor is Mn(2+).

The enzyme catalyses L-seryl-[protein] + ATP = 3-O-(5'-adenylyl)-L-seryl-[protein] + diphosphate. It carries out the reaction L-threonyl-[protein] + ATP = 3-O-(5'-adenylyl)-L-threonyl-[protein] + diphosphate. The catalysed reaction is L-tyrosyl-[protein] + ATP = O-(5'-adenylyl)-L-tyrosyl-[protein] + diphosphate. It catalyses the reaction L-histidyl-[protein] + UTP = N(tele)-(5'-uridylyl)-L-histidyl-[protein] + diphosphate. The enzyme catalyses L-seryl-[protein] + UTP = O-(5'-uridylyl)-L-seryl-[protein] + diphosphate. It carries out the reaction L-tyrosyl-[protein] + UTP = O-(5'-uridylyl)-L-tyrosyl-[protein] + diphosphate. In terms of biological role, nucleotidyltransferase involved in the post-translational modification of proteins. It can catalyze the addition of adenosine monophosphate (AMP) or uridine monophosphate (UMP) to a protein, resulting in modifications known as AMPylation and UMPylation. This Thiobacillus denitrificans (strain ATCC 25259 / T1) protein is Protein nucleotidyltransferase YdiU.